A 377-amino-acid polypeptide reads, in one-letter code: Probable riboflavin import permease protein RfuC (377 aa).

The next 10 membrane-spanning stretches (helical) occupy residues 4–24 (VINSCIAVLLGVAVMSAVIVL), 49–69 (ALFHKAGLFVCMALGASCALK), 72–92 (MINLGGDGQIYAAGFVTALLL), 98–118 (VGFLLQWSVALLCALSVAGIL), 135–155 (ITSFLLSTACVPLIDALIITV), 182–202 (FGVPAVLTYASLVALAVGCFF), 223–245 (FVGFPVWATYVWGMVLSGALFGL), 249–268 (FSVVGLFGTCYVGFSVGMGY), 274–294 (ALIAHAHITVLVPLAFFFAWM), and 303–323 (LGAHLTVNVVLFLQAAIFLLI).

This sequence belongs to the binding-protein-dependent transport system permease family. The complex is probably composed of two ATP-binding proteins (RfuB), two transmembrane proteins (RfuC and RfuD) and a solute-binding protein (RfuA).

The protein localises to the cell inner membrane. Its function is as follows. Probably part of the ABC transporter complex RfuABCD involved in riboflavin import. Probably responsible for the translocation of the substrate across the membrane. The protein is Probable riboflavin import permease protein RfuC of Treponema pallidum (strain Nichols).